Here is a 107-residue protein sequence, read N- to C-terminus: Nucleoid-associated protein AZOSEA06390 (107 aa).

Belongs to the YbaB/EbfC family. As to quaternary structure, homodimer.

The protein localises to the cytoplasm. It is found in the nucleoid. In terms of biological role, binds to DNA and alters its conformation. May be involved in regulation of gene expression, nucleoid organization and DNA protection. This chain is Nucleoid-associated protein AZOSEA06390, found in Aromatoleum aromaticum (strain DSM 19018 / LMG 30748 / EbN1) (Azoarcus sp. (strain EbN1)).